Reading from the N-terminus, the 151-residue chain is Large ribosomal subunit protein bL9 (151 aa).

This sequence belongs to the bacterial ribosomal protein bL9 family.

Functionally, binds to the 23S rRNA. This Nitrosococcus oceani (strain ATCC 19707 / BCRC 17464 / JCM 30415 / NCIMB 11848 / C-107) protein is Large ribosomal subunit protein bL9.